An 85-amino-acid polypeptide reads, in one-letter code: Large ribosomal subunit protein bL27 (85 aa).

The segment at 1-23 (MAHKKAGGSTRNGRDSESKRLGV) is disordered.

This sequence belongs to the bacterial ribosomal protein bL27 family.

The polypeptide is Large ribosomal subunit protein bL27 (Thioalkalivibrio sulfidiphilus (strain HL-EbGR7)).